The following is a 51-amino-acid chain: Insulin (51 aa).

3 cysteine pairs are disulfide-bonded: Cys7/Cys37, Cys19/Cys50, and Cys36/Cys41.

This sequence belongs to the insulin family. In terms of assembly, heterodimer of a B chain and an A chain linked by two disulfide bonds.

The protein resides in the secreted. Functionally, insulin decreases blood glucose concentration. It increases cell permeability to monosaccharides, amino acids and fatty acids. It accelerates glycolysis, the pentose phosphate cycle, and glycogen synthesis in liver. The chain is Insulin (INS) from Balaenoptera physalus (Fin whale).